The sequence spans 335 residues: Dye-decolorizing peroxidase (335 aa).

Asp149 acts as the Proton acceptor in catalysis. His222 provides a ligand contact to heme. Residues 312–335 (LPQAATPTLAAGSLSIGSLKGSPR) are targeting peptide.

The protein belongs to the DyP-type peroxidase family. As to quaternary structure, homotetramer, presumably also in the encapsulin nanocompartment. It depends on heme b as a cofactor.

The protein localises to the encapsulin nanocompartment. The enzyme catalyses 2 a phenolic donor + H2O2 = 2 a phenolic radical donor + 2 H2O. Cargo of a type 1 encapsulin nanocompartment in situ; this cargo protects against oxidative stress at low pH. When expressed in the cytoplasm (absence of the encapsulin shell gene) it is almost as protective as the intact nanocompartment; its encapsulation has a modest yet significant effect on protection against oxidative stress at low pH. A heme-dependent peroxidase, it probably does not have deferrochelatase activity. Converts guaiacol and H2O2 to tetraguaiacol, also acts on 2,2'-azino-bis(3-ethylbenzothiazoline-6-sulfonic acid) (ABTS). Retains peroxidase activity when encapsulated but has a reduced set of substrates; acts on ABTS but not guaiacol. The chain is Dye-decolorizing peroxidase from Mycobacterium tuberculosis (strain ATCC 25618 / H37Rv).